Consider the following 465-residue polypeptide: VGFKAGVKEYKLTYYTPTYETKDTDILAAFRVTPQPGVPPEEAGAAVAAESSTGTWTTVWTDGLTSLDRYKGRCYHIEPVAGEESQFIAYVAYPLDLFEEGSVTNMFTSIVGNVFGFKALRALRLEDLRIPVAYVKTFQGPPHGIQVERDKLNKYGRPLLGCTIKPKLGLSAKNYGRAVYECLRGGLDFTKDDENVNSQPFMRWRDRFLFCAEANYKSQAETGEIKGHYLNATAGTCEEMMKRAVFARELGVPIVMHDYLTGGFTANTSLAHYCRDNGLLLHIHRAMHAVIDRQKNHGIHFRVLAKALRMSGGDHIHSGTVVGKLEGERDITLGFVDLLRDDFVEKDRSRGIYFTQDWVSLPGVLPVASGGIHVWHMPALTEIFGDDSVLQFGGGTLGHPWGKPPGAVANRVALEACVQARNEGRDLAREGNEIIREASKWSPELAAACEVWKEIKFEFEAMDTL.

At Lys4 the chain carries N6,N6,N6-trimethyllysine. Substrate is bound by residues Asn113 and Thr163. The active-site Proton acceptor is the Lys165. A substrate-binding site is contributed by Lys167. Positions 191, 193, and 194 each coordinate Mg(2+). Lys191 bears the N6-carboxylysine mark. His284 (proton acceptor) is an active-site residue. 3 residues coordinate substrate: Arg285, His317, and Ser369.

Belongs to the RuBisCO large chain family. Type I subfamily. Heterohexadecamer of 8 large chains and 8 small chains; disulfide-linked. The disulfide link is formed within the large subunit homodimers. Requires Mg(2+) as cofactor. Post-translationally, the disulfide bond which can form in the large chain dimeric partners within the hexadecamer appears to be associated with oxidative stress and protein turnover.

Its subcellular location is the plastid. It localises to the chloroplast. The catalysed reaction is 2 (2R)-3-phosphoglycerate + 2 H(+) = D-ribulose 1,5-bisphosphate + CO2 + H2O. The enzyme catalyses D-ribulose 1,5-bisphosphate + O2 = 2-phosphoglycolate + (2R)-3-phosphoglycerate + 2 H(+). Its function is as follows. RuBisCO catalyzes two reactions: the carboxylation of D-ribulose 1,5-bisphosphate, the primary event in carbon dioxide fixation, as well as the oxidative fragmentation of the pentose substrate in the photorespiration process. Both reactions occur simultaneously and in competition at the same active site. This chain is Ribulose bisphosphate carboxylase large chain, found in Cornus canadensis (Bunchberry dogwood).